A 949-amino-acid chain; its full sequence is Translation initiation factor IF-2 (949 aa).

2 disordered regions span residues 50–206 and 220–359; these read FTEK…GAAR and QNAE…TERK. 2 stretches are compositionally biased toward basic and acidic residues: residues 52 to 84 and 104 to 143; these read EKPKTETKPKIKAVDETPKPKLEAVKEEVKVEK and FKAEREARAKEQAARQKRNAQESTERRQDNRYQQKNDQGS. Polar residues-rich tracts occupy residues 144–154 and 164–180; these read KNRNFNKSQGQ and GSQQNNRQDSRIASNKP. Positions 187-206 are enriched in low complexity; the sequence is NAANRNQNNSQQERQVGAAR. Over residues 224-275 the composition is skewed to basic and acidic residues; sequence YMRHKETQLREQEEARRLAERAKEEARLAAQKAAEEKAKEAEKAAKTERFEP. Low complexity predominate over residues 319 to 336; that stretch reads KSWNNQNQVRNQRNSNWN. Positions 450–619 constitute a tr-type G domain; the sequence is ERAPVVTIMG…LLVAEVEELK (170 aa). The tract at residues 459 to 466 is G1; sequence GHVDHGKT. 459-466 is a binding site for GTP; that stretch reads GHVDHGKT. The tract at residues 484 to 488 is G2; that stretch reads GITQH. The segment at 505–508 is G3; it reads DTPG. GTP-binding positions include 505-509 and 559-562; these read DTPGH and NKID. The tract at residues 559–562 is G4; that stretch reads NKID. Residues 595 to 597 form a G5 region; that stretch reads SAK.

It belongs to the TRAFAC class translation factor GTPase superfamily. Classic translation factor GTPase family. IF-2 subfamily.

The protein resides in the cytoplasm. In terms of biological role, one of the essential components for the initiation of protein synthesis. Protects formylmethionyl-tRNA from spontaneous hydrolysis and promotes its binding to the 30S ribosomal subunits. Also involved in the hydrolysis of GTP during the formation of the 70S ribosomal complex. In Streptococcus uberis (strain ATCC BAA-854 / 0140J), this protein is Translation initiation factor IF-2.